A 758-amino-acid chain; its full sequence is Transmembrane E3 ubiquitin-protein ligase 1 (758 aa).

A signal peptide spans 1–26 (MEIDGNTLVFIIVILFLFFSSPGGDG). At 27–398 (VSSQYEFNQL…YELKIMSIRK (372 aa)) the chain is on the lumenal side. The helical transmembrane segment at 399–419 (HLLFGIALFAAQIYLLLTQMH) threads the bilayer. The Cytoplasmic portion of the chain corresponds to 420 to 431 (HTNTPSMVNKIS). Residues 432–452 (FYCFSMINLVDGSLATLYFVA) traverse the membrane as a helical segment. Topologically, residues 453–458 (ASVVPE) are lumenal. Residues 459–479 (LYLPLVISAFSCFILASIFEI) traverse the membrane as a helical segment. Residues 480–523 (RYLISIYASQVNEQNVGIINLLRGNTGTYDENRPRPAFIPDEGS) are Cytoplasmic-facing. Residues 524–544 (IGGSLYGRFFFMLIIFTFLIL) traverse the membrane as a helical segment. Topologically, residues 545-553 (SSTSWPRQL) are lumenal. A helical transmembrane segment spans residues 554 to 574 (RMVFEYILIFILNSYWIPQIF). The Cytoplasmic portion of the chain corresponds to 575 to 602 (RNAVKGIPSRRERARSSIGGNRSQNKMP). A helical transmembrane segment spans residues 603–623 (LLWSFVIGTTIIRSLPVVYVF). Topologically, residues 624 to 635 (TYSSNVFRHHKD) are lumenal. A helical membrane pass occupies residues 636–656 (VHFVVFLSLWLLFQISILYSQ). The Cytoplasmic portion of the chain corresponds to 657–758 (DVLGSRWFLP…PVCRSPLPPL (102 aa)). The RING-type; atypical zinc finger occupies 699–752 (CAICMSDVPIYIEEIPETHKVDQHSYMVTPCNHVFHTSCLENWMNYKLQCPVCR).

Component of the DSC E3 ligase complexes composed of at least TUL1, DSC2, DSC3, UBX3, CDC48 as well as VLD1 for the vacuole-localized complex or GLD1 for the Golgi/endosome-localized complex. Interacts with UBC4.

It localises to the golgi apparatus membrane. The catalysed reaction is S-ubiquitinyl-[E2 ubiquitin-conjugating enzyme]-L-cysteine + [acceptor protein]-L-lysine = [E2 ubiquitin-conjugating enzyme]-L-cysteine + N(6)-ubiquitinyl-[acceptor protein]-L-lysine.. It participates in protein modification; protein ubiquitination. Functionally, catalytic component of the DSC E3 ubiquitin ligase complexes that tag proteins present in Golgi, endosome and vacuole membranes and function in protein homeostasis under non-stress conditions and support a role in protein quality control. Mediates ubiquitination of vacuolar proteins such as CPS1, PPN1, PEP12 and other proteins containing exposed hydrophilic residues within their transmembrane domains, leading to their sorting into internal vesicles in late endosomes. Targets also the unpalmitoylated endosomal SNARE TLG1 to the MVB pathway. In Saccharomyces cerevisiae (strain ATCC 204508 / S288c) (Baker's yeast), this protein is Transmembrane E3 ubiquitin-protein ligase 1 (TUL1).